The sequence spans 524 residues: GMP synthase [glutamine-hydrolyzing] (524 aa).

Positions 9-207 (RILILDFGSQ…VIHICQCIPN (199 aa)) constitute a Glutamine amidotransferase type-1 domain. C86 functions as the Nucleophile in the catalytic mechanism. Active-site residues include H181 and E183. In terms of domain architecture, GMPS ATP-PPase spans 208–399 (WTTKHIIEDS…LGLPADLIYR (192 aa)). An ATP-binding site is contributed by 235 to 241 (SGGVDSA).

As to quaternary structure, homodimer.

It catalyses the reaction XMP + L-glutamine + ATP + H2O = GMP + L-glutamate + AMP + diphosphate + 2 H(+). It functions in the pathway purine metabolism; GMP biosynthesis; GMP from XMP (L-Gln route): step 1/1. In terms of biological role, catalyzes the synthesis of GMP from XMP. The chain is GMP synthase [glutamine-hydrolyzing] from Coxiella burnetii (strain CbuG_Q212) (Coxiella burnetii (strain Q212)).